Consider the following 124-residue polypeptide: MRHYEIVFMVHPDQSEQVPAMIERYTASVKEAGGQVHRLEDWGRRQLAYPINKLHKAHYVLMNVEAPQRVIDELETNFRYNDAVLRNLIVHTKAAVTEASPMVKAKESKVAEAVAEVESEEAGE.

This sequence belongs to the bacterial ribosomal protein bS6 family.

Functionally, binds together with bS18 to 16S ribosomal RNA. This Actinobacillus pleuropneumoniae serotype 5b (strain L20) protein is Small ribosomal subunit protein bS6.